Consider the following 490-residue polypeptide: Probable cytosol aminopeptidase (490 aa).

Positions 260 and 265 each coordinate Mn(2+). Lys272 is a catalytic residue. Mn(2+) is bound by residues Asp284, Asp343, and Glu345. Residue Arg347 is part of the active site.

Belongs to the peptidase M17 family. Requires Mn(2+) as cofactor.

Its subcellular location is the cytoplasm. The catalysed reaction is Release of an N-terminal amino acid, Xaa-|-Yaa-, in which Xaa is preferably Leu, but may be other amino acids including Pro although not Arg or Lys, and Yaa may be Pro. Amino acid amides and methyl esters are also readily hydrolyzed, but rates on arylamides are exceedingly low.. It catalyses the reaction Release of an N-terminal amino acid, preferentially leucine, but not glutamic or aspartic acids.. Functionally, presumably involved in the processing and regular turnover of intracellular proteins. Catalyzes the removal of unsubstituted N-terminal amino acids from various peptides. This Gloeothece citriformis (strain PCC 7424) (Cyanothece sp. (strain PCC 7424)) protein is Probable cytosol aminopeptidase.